The sequence spans 400 residues: Gap junction alpha-8 protein (400 aa).

Residues Gly2–Glu12 lie within the membrane without spanning it. Topologically, residues Gln13–Ile21 are cytoplasmic. The chain crosses the membrane as a helical span at residues Gly22–Glu42. At Leu43 to Pro71 the chain is on the extracellular side. 3 disulfide bridges follow: Cys54/Cys196, Cys61/Cys190, and Cys65/Cys185. Residues Ile72–Tyr92 form a helical membrane-spanning segment. The Cytoplasmic portion of the chain corresponds to Phe93 to His156. The span at Glu104–Ala118 shows a compositional bias: basic and acidic residues. Positions Glu104–Gly139 are disordered. The span at Pro129–Asp138 shows a compositional bias: polar residues. Residues Ile157–Phe177 form a helical membrane-spanning segment. The Extracellular segment spans residues Arg178–Thr205. A helical membrane pass occupies residues Ile206–Ile226. Over Ser227–Val400 the chain is Cytoplasmic. A disordered region spans residues Tyr323 to Val400. Residues Lys327–Ala336 show a composition bias toward basic and acidic residues. The segment covering Glu337–Gln346 has biased composition (acidic residues). Ser364 carries the phosphoserine; by CK2 modification. The segment covering Arg381 to Arg392 has biased composition (low complexity).

Belongs to the connexin family. Alpha-type (group II) subfamily. As to quaternary structure, a hemichannel or connexon is composed of a hexamer of connexins. A functional gap junction is formed by the apposition of two hemichannels. Forms heteromeric channels with GJA3. During early stages of lens development, interacts with the C-terminus of MIP. In terms of processing, proteolytically cleaved by caspase-3 during lens development. Post-translationally, phosphorylated on Ser-364; which inhibits cleavage by caspase-3.

The protein resides in the cell membrane. It localises to the cell junction. The protein localises to the gap junction. In terms of biological role, structural component of eye lens gap junctions. Gap junctions are dodecameric channels that connect the cytoplasm of adjoining cells. They are formed by the docking of two hexameric hemichannels, one from each cell membrane. Small molecules and ions diffuse from one cell to a neighboring cell via the central pore. This Gallus gallus (Chicken) protein is Gap junction alpha-8 protein (GJA8).